The following is a 221-amino-acid chain: Vesicle transport v-SNARE 13 (221 aa).

The Cytoplasmic segment spans residues methionine 1–tryptophan 198. Positions glutamate 32–serine 93 form a coiled coil. The chain crosses the membrane as a helical; Anchor for type IV membrane protein span at residues threonine 199–leucine 219. Residues threonine 220–arginine 221 lie on the Vesicular side of the membrane.

This sequence belongs to the VTI1 family. In terms of assembly, forms SNARE complexes with t-SNAREs. Expressed at low levels in roots, stems, flowers and leaves.

The protein resides in the vacuole membrane. Its subcellular location is the prevacuolar compartment membrane. It is found in the endosome membrane. The protein localises to the early endosome membrane. Its function is as follows. May function as a v-SNARE responsible for targeting vesicles involved in the secretory pathway. Involved in actin-dependent endosomal trafficking pathways associated with the vacuole within root hairs and root tip epidermal cells. Essential for cell wall organization and polarized root hair growth. Also required for the localization of SYP41 to the trans-Golgi network in root hair cells. The protein is Vesicle transport v-SNARE 13 of Arabidopsis thaliana (Mouse-ear cress).